A 130-amino-acid polypeptide reads, in one-letter code: Small ribosomal subunit protein uS11 (130 aa).

Belongs to the universal ribosomal protein uS11 family. Part of the 30S ribosomal subunit. Interacts with proteins S7 and S18. Binds to IF-3.

Functionally, located on the platform of the 30S subunit, it bridges several disparate RNA helices of the 16S rRNA. Forms part of the Shine-Dalgarno cleft in the 70S ribosome. In Prochlorococcus marinus (strain MIT 9301), this protein is Small ribosomal subunit protein uS11.